The following is a 462-amino-acid chain: Elongation factor 1-alpha, somatic form (462 aa).

The residue at position 2 (glycine 2) is a N,N,N-trimethylglycine. One can recognise a tr-type G domain in the interval 5 to 242 (KTHINIVVIG…DCILPPSRPT (238 aa)). Residues 14-21 (GHVDSGKS) are G1. 14–21 (GHVDSGKS) lines the GTP pocket. Positions 70 to 74 (GITID) are G2. A G3 region spans residues 91-94 (DAPG). Residues 91 to 95 (DAPGH) and 153 to 156 (NKMD) each bind GTP. The segment at 153–156 (NKMD) is G4. Residues 194–196 (SGW) are G5. Glutamate 301 and glutamate 374 each carry 5-glutamyl glycerylphosphorylethanolamine.

It belongs to the TRAFAC class translation factor GTPase superfamily. Classic translation factor GTPase family. EF-Tu/EF-1A subfamily.

The protein resides in the cytoplasm. Functionally, this protein promotes the GTP-dependent binding of aminoacyl-tRNA to the A-site of ribosomes during protein biosynthesis. The protein is Elongation factor 1-alpha, somatic form (eef1as) of Xenopus laevis (African clawed frog).